A 356-amino-acid chain; its full sequence is Holliday junction branch migration complex subunit RuvB (356 aa).

Positions 1 to 14 (MAIVSSITNHSSLP) are enriched in polar residues. The interval 1-20 (MAIVSSITNHSSLPNDKGEE) is disordered. The interval 13–201 (LPNDKGEERL…FGITQRLDFY (189 aa)) is large ATPase domain (RuvB-L). Residues Leu40, Arg41, Gly82, Lys85, Thr86, Thr87, Arg191, Tyr201, and Arg238 each coordinate ATP. Thr86 serves as a coordination point for Mg(2+). The tract at residues 202 to 273 (NYLDLENIIK…VVNDALDLHR (72 aa)) is small ATPAse domain (RuvB-S). The tract at residues 276-356 (QRGLDATDRS…LLTSPNNIDK (81 aa)) is head domain (RuvB-H). 2 residues coordinate DNA: Arg331 and Arg336.

The protein belongs to the RuvB family. Homohexamer. Forms an RuvA(8)-RuvB(12)-Holliday junction (HJ) complex. HJ DNA is sandwiched between 2 RuvA tetramers; dsDNA enters through RuvA and exits via RuvB. An RuvB hexamer assembles on each DNA strand where it exits the tetramer. Each RuvB hexamer is contacted by two RuvA subunits (via domain III) on 2 adjacent RuvB subunits; this complex drives branch migration. In the full resolvosome a probable DNA-RuvA(4)-RuvB(12)-RuvC(2) complex forms which resolves the HJ.

Its subcellular location is the cytoplasm. It carries out the reaction ATP + H2O = ADP + phosphate + H(+). Its function is as follows. The RuvA-RuvB-RuvC complex processes Holliday junction (HJ) DNA during genetic recombination and DNA repair, while the RuvA-RuvB complex plays an important role in the rescue of blocked DNA replication forks via replication fork reversal (RFR). RuvA specifically binds to HJ cruciform DNA, conferring on it an open structure. The RuvB hexamer acts as an ATP-dependent pump, pulling dsDNA into and through the RuvAB complex. RuvB forms 2 homohexamers on either side of HJ DNA bound by 1 or 2 RuvA tetramers; 4 subunits per hexamer contact DNA at a time. Coordinated motions by a converter formed by DNA-disengaged RuvB subunits stimulates ATP hydrolysis and nucleotide exchange. Immobilization of the converter enables RuvB to convert the ATP-contained energy into a lever motion, pulling 2 nucleotides of DNA out of the RuvA tetramer per ATP hydrolyzed, thus driving DNA branch migration. The RuvB motors rotate together with the DNA substrate, which together with the progressing nucleotide cycle form the mechanistic basis for DNA recombination by continuous HJ branch migration. Branch migration allows RuvC to scan DNA until it finds its consensus sequence, where it cleaves and resolves cruciform DNA. This is Holliday junction branch migration complex subunit RuvB from Prochlorococcus marinus (strain NATL2A).